Reading from the N-terminus, the 272-residue chain is Elongation factor Ts (272 aa).

Residues 76-79 (TDFV) form an involved in Mg(2+) ion dislocation from EF-Tu region.

The protein belongs to the EF-Ts family.

The protein resides in the cytoplasm. Functionally, associates with the EF-Tu.GDP complex and induces the exchange of GDP to GTP. It remains bound to the aminoacyl-tRNA.EF-Tu.GTP complex up to the GTP hydrolysis stage on the ribosome. The polypeptide is Elongation factor Ts (Corynebacterium urealyticum (strain ATCC 43042 / DSM 7109)).